The following is a 216-amino-acid chain: Small ribosomal subunit protein uS5 (216 aa).

Residues 1-55 are disordered; that stretch reads MDKKLENQKDLLNQDPKVELNSQSVAKNPLNSREVKPIQRRRPLRKNARDKNSKP. Positions 20 to 31 are enriched in polar residues; the sequence is LNSQSVAKNPLN. The 64-residue stretch at 57 to 120 folds into the S5 DRBM domain; it reads FEERVIAIHR…KDAQNRLVSV (64 aa).

The protein belongs to the universal ribosomal protein uS5 family. As to quaternary structure, part of the 30S ribosomal subunit. Contacts proteins S4 and S8.

Its function is as follows. With S4 and S12 plays an important role in translational accuracy. Located at the back of the 30S subunit body where it stabilizes the conformation of the head with respect to the body. The sequence is that of Small ribosomal subunit protein uS5 from Mesomycoplasma hyopneumoniae (strain 7448) (Mycoplasma hyopneumoniae).